The following is a 326-amino-acid chain: Tetraacyldisaccharide 4'-kinase (326 aa).

Position 54–61 (Ser-54–Thr-61) interacts with ATP.

This sequence belongs to the LpxK family.

It carries out the reaction a lipid A disaccharide + ATP = a lipid IVA + ADP + H(+). It participates in glycolipid biosynthesis; lipid IV(A) biosynthesis; lipid IV(A) from (3R)-3-hydroxytetradecanoyl-[acyl-carrier-protein] and UDP-N-acetyl-alpha-D-glucosamine: step 6/6. Its function is as follows. Transfers the gamma-phosphate of ATP to the 4'-position of a tetraacyldisaccharide 1-phosphate intermediate (termed DS-1-P) to form tetraacyldisaccharide 1,4'-bis-phosphate (lipid IVA). In Rickettsia canadensis (strain McKiel), this protein is Tetraacyldisaccharide 4'-kinase.